The primary structure comprises 454 residues: Ribosomal protein uS12 methylthiotransferase RimO (454 aa).

The MTTase N-terminal domain occupies 14-125 (SKVAFSHVGC…IAKVLDRVEK (112 aa)). Positions 23, 59, 88, 163, 167, and 170 each coordinate [4Fe-4S] cluster. The Radical SAM core domain occupies 149 to 378 (DKNKFVAYLR…ISVQQNISKD (230 aa)). A TRAM domain is found at 381–452 (QSYVGSKMKI…EYDLYGETLK (72 aa)).

Belongs to the methylthiotransferase family. RimO subfamily. [4Fe-4S] cluster is required as a cofactor.

It localises to the cytoplasm. The catalysed reaction is L-aspartate(89)-[ribosomal protein uS12]-hydrogen + (sulfur carrier)-SH + AH2 + 2 S-adenosyl-L-methionine = 3-methylsulfanyl-L-aspartate(89)-[ribosomal protein uS12]-hydrogen + (sulfur carrier)-H + 5'-deoxyadenosine + L-methionine + A + S-adenosyl-L-homocysteine + 2 H(+). In terms of biological role, catalyzes the methylthiolation of an aspartic acid residue of ribosomal protein uS12. This is Ribosomal protein uS12 methylthiotransferase RimO from Prochlorococcus marinus (strain MIT 9215).